An 87-amino-acid chain; its full sequence is Large ribosomal subunit protein bL28 (87 aa).

The protein belongs to the bacterial ribosomal protein bL28 family.

This Methylacidiphilum infernorum (isolate V4) (Methylokorus infernorum (strain V4)) protein is Large ribosomal subunit protein bL28.